The primary structure comprises 334 residues: Protein-methionine-sulfoxide reductase catalytic subunit MsrP (334 aa).

The segment at residues 1–44 (MKKNQFLKESDVTAESVFFMKRRQVLKALGISAAAFSLPHAAHA) is a signal peptide (tat-type signal). Residues asparagine 88, 91–92 (YE), cysteine 146, threonine 181, asparagine 233, arginine 238, and 249–251 (GIK) each bind Mo-molybdopterin.

The protein belongs to the MsrP family. As to quaternary structure, heterodimer of a catalytic subunit (MsrP) and a heme-binding subunit (MsrQ). It depends on Mo-molybdopterin as a cofactor. In terms of processing, predicted to be exported by the Tat system. The position of the signal peptide cleavage has not been experimentally proven.

It is found in the periplasm. The catalysed reaction is L-methionyl-[protein] + a quinone + H2O = L-methionyl-(S)-S-oxide-[protein] + a quinol. It catalyses the reaction L-methionyl-[protein] + a quinone + H2O = L-methionyl-(R)-S-oxide-[protein] + a quinol. Functionally, part of the MsrPQ system that repairs oxidized periplasmic proteins containing methionine sulfoxide residues (Met-O), using respiratory chain electrons. Thus protects these proteins from oxidative-stress damage caused by reactive species of oxygen and chlorine generated by the host defense mechanisms. MsrPQ is essential for the maintenance of envelope integrity under bleach stress, rescuing a wide series of structurally unrelated periplasmic proteins from methionine oxidation, including the primary periplasmic chaperone SurA and the lipoprotein Pal. The catalytic subunit MsrP is non-stereospecific, being able to reduce both (R-) and (S-) diastereoisomers of methionine sulfoxide. The polypeptide is Protein-methionine-sulfoxide reductase catalytic subunit MsrP (Escherichia coli O7:K1 (strain IAI39 / ExPEC)).